We begin with the raw amino-acid sequence, 199 residues long: MTDLYAEALATFAALYAEAQNSAELEASAMTVATANVDGRPSARTVLLKAFDARGFVFYTHLDSAKGRDLQTHPQAALLFLWRSLREAGIQVRIEGGVQLVSADESDAYFASRPRMSQIGAWASRQSQALGSREEFDAAIAKVEATFAGREVPRPDGWGGFRVVPQAFEFWYGAKFRLHERWRYEADAASHWSKRMLYP.

FMN contacts are provided by residues 44–49, 59–60, Lys-66, and Gln-91; these read RTVLLK and YT. Lys-49 provides a ligand contact to substrate. Substrate contacts are provided by Tyr-109, Arg-113, and Ser-117. Residues 126–127 and Trp-171 each bind FMN; that span reads QS. Substrate is bound at residue 177–179; sequence RLH. An FMN-binding site is contributed by Arg-181.

Belongs to the pyridoxamine 5'-phosphate oxidase family. In terms of assembly, homodimer. The cofactor is FMN.

It catalyses the reaction pyridoxamine 5'-phosphate + O2 + H2O = pyridoxal 5'-phosphate + H2O2 + NH4(+). The enzyme catalyses pyridoxine 5'-phosphate + O2 = pyridoxal 5'-phosphate + H2O2. It participates in cofactor metabolism; pyridoxal 5'-phosphate salvage; pyridoxal 5'-phosphate from pyridoxamine 5'-phosphate: step 1/1. The protein operates within cofactor metabolism; pyridoxal 5'-phosphate salvage; pyridoxal 5'-phosphate from pyridoxine 5'-phosphate: step 1/1. In terms of biological role, catalyzes the oxidation of either pyridoxine 5'-phosphate (PNP) or pyridoxamine 5'-phosphate (PMP) into pyridoxal 5'-phosphate (PLP). The polypeptide is Pyridoxine/pyridoxamine 5'-phosphate oxidase (Xanthomonas axonopodis pv. citri (strain 306)).